Consider the following 214-residue polypeptide: MSSLATLLVLSDSRLPTGGHVHSGGVEEAVSSGLVVDLATLRAYLTRRIRTSGLVTASLAAAVHRGSLPAAAGEAGDAETDARTPSPAARAASRAQGRGLVRLARRVWPEQDWDGLGATPHLAVAAGVAGRAGGLAPDHTALSVVYTTMTGSATAAQRLLALDPGDVAAVTFALSPLCEHTAAEAAKELADLSDPLLDVLAQRHLERERPLFAS.

The disordered stretch occupies residues 70–95; it reads AAAGEAGDAETDARTPSPAARAASRA. The span at 83–95 shows a compositional bias: low complexity; the sequence is RTPSPAARAASRA.

Belongs to the UreF family. UreD, UreF and UreG form a complex that acts as a GTP-hydrolysis-dependent molecular chaperone, activating the urease apoprotein by helping to assemble the nickel containing metallocenter of UreC. The UreE protein probably delivers the nickel.

Its subcellular location is the cytoplasm. Required for maturation of urease via the functional incorporation of the urease nickel metallocenter. This chain is Urease accessory protein UreF, found in Mycolicibacterium vanbaalenii (strain DSM 7251 / JCM 13017 / BCRC 16820 / KCTC 9966 / NRRL B-24157 / PYR-1) (Mycobacterium vanbaalenii).